The chain runs to 293 residues: uncharacterized protein (293 aa).

Catalysis depends on charge relay system residues Thr-43 and Tyr-105. The active-site Proton donor is the Tyr-131. The Schiff-base intermediate with substrate role is filled by Lys-159.

The protein belongs to the DapA family. In terms of assembly, homotetramer.

It is found in the cytoplasm. This is an uncharacterized protein from Thermococcus onnurineus (strain NA1).